The primary structure comprises 341 residues: tRNA N6-adenosine threonylcarbamoyltransferase (341 aa).

Fe cation contacts are provided by H111 and H115. Substrate is bound by residues 133–137 (AVSGG), D166, G179, D183, and N273. Position 301 (D301) interacts with Fe cation.

This sequence belongs to the KAE1 / TsaD family. Requires Fe(2+) as cofactor.

The protein resides in the cytoplasm. The catalysed reaction is L-threonylcarbamoyladenylate + adenosine(37) in tRNA = N(6)-L-threonylcarbamoyladenosine(37) in tRNA + AMP + H(+). Functionally, required for the formation of a threonylcarbamoyl group on adenosine at position 37 (t(6)A37) in tRNAs that read codons beginning with adenine. Is involved in the transfer of the threonylcarbamoyl moiety of threonylcarbamoyl-AMP (TC-AMP) to the N6 group of A37, together with TsaE and TsaB. TsaD likely plays a direct catalytic role in this reaction. In Geotalea daltonii (strain DSM 22248 / JCM 15807 / FRC-32) (Geobacter daltonii), this protein is tRNA N6-adenosine threonylcarbamoyltransferase.